We begin with the raw amino-acid sequence, 562 residues long: Terpene synthase 2 (562 aa).

Mg(2+)-binding residues include Asp-315, Asp-319, Asp-459, and Glu-467. The DDXXD motif motif lies at 315 to 319 (DDEYD).

It belongs to the terpene synthase family. Tpsa subfamily. Mg(2+) is required as a cofactor. Requires Mn(2+) as cofactor. Expressed at low levels in stems, leaves, roots and fruits.

It carries out the reaction (2E,6E)-farnesyl diphosphate = delta-cadinene + diphosphate. The catalysed reaction is (2E,6E)-farnesyl diphosphate = alpha-cadinene + diphosphate. The enzyme catalyses (2E,6E)-farnesyl diphosphate + H2O = (-)-delta-cadinol + diphosphate. Its pathway is secondary metabolite biosynthesis; terpenoid biosynthesis. Its function is as follows. Sesquiterpene synthase involved in the biosynthesis of volatile compounds that contribute to the characteristic flavors of black pepper. Mediates the conversion of (2E,6E)-farnesyl diphosphate (FPP) into alpha-cadinene, delta-cadinene and delta-cadinol. This is Terpene synthase 2 from Piper nigrum (Black pepper).